The chain runs to 102 residues: MYAVVRTGGKQYKVSEGDFLKVEKLEGAVGDTIELKDILMVGGETVKIGTPLVPSASVVGKIVEQGKDKKILVFKSKKRKDSKKLRGHRQPRTVLKIEKING.

Belongs to the bacterial ribosomal protein bL21 family. Part of the 50S ribosomal subunit. Contacts protein L20.

This protein binds to 23S rRNA in the presence of protein L20. This chain is Large ribosomal subunit protein bL21, found in Geobacter metallireducens (strain ATCC 53774 / DSM 7210 / GS-15).